Here is a 119-residue protein sequence, read N- to C-terminus: Ergochrome gene cluster protein CPUR_05426 (119 aa).

Its pathway is pigment biosynthesis. Its function is as follows. Part of the ergochrome gene cluster responsible for the typical purple-black color of the ergot sclerotia. The ergochrome gene cluster produces several ergot pigments including the yellow ergochrome secalonic acid and its derivatives, as well as the red anthraquinones endocrocin and clavorubin. The pathway begins with the synthesis of atrochrysone thioester by the polyketide synthase (PKS) CPUR_05437. The atrochrysone carboxyl ACP thioesterase CPUR_05436 then breaks the thioester bond and releases the atrochrysone carboxylic acid from CPUR_05437. The atrochrysone carboxylic acid is then converted to atrochrysone which is further transformed into emodin anthrone. The next step is performed by the anthrone oxygenase CPUR_05434 that catalyzes the oxidation of emodinanthrone to emodin. Emodin is further modified to yield monodictyphenone via several steps involving CPUR_05427, CPUR_05428, CPUR_05429 and CPUR_05430. The short chain dehydrogenase/reductase CPUR_05418 then catalyzes the C-5 ketoreduction to give the xanthone skeleton of the monomeric units. Ergochromes formation requires further dimerization steps of different xanthone units, probably catalyzed by the cytochrome P450 monooxygenase CPUR_05419. CPUR_05425, CPUR_05426 and CPUR_05431 are unique to Claviceps, thus it is likely that they are involved in further modification of xanthone units or in their dimerization. The yellow ergochromes and the red anthraquinone pigments endocrocin and clavorubin are products from the same PKS derived precursors and the latter are likely shunt products in the pathway of xanthone biosynthesis. It is proposed that atrochrysone carboxylic acid released from the PKS CPUR_05437 can also be converted to endocrocin anthrone which is further oxidized into endocrocin by CPUR_05435. Endocrocin could be then modified to clavorubin, possibly by CPUR_05423 and CPUR_05431. Clavorubin is the principal anthraquinone metabolite produced by the cluster with a much higher yield compared to endocrocin. The protein is Ergochrome gene cluster protein CPUR_05426 of Claviceps purpurea (strain 20.1) (Ergot fungus).